Reading from the N-terminus, the 639-residue chain is MGKIIGIDLGTTNSCVAVLDGGKARVLENAEGDRTTPSIIAYTDDETIVGQPAKRQAVTNPNNTFFAIKRLIGRRFKDDEVQRDVNIMPFKIIQADNGDAWVESRGNKMAPPQVSAEILKKMKKTAEDFLGEEVTEAVITVPAYFNDSQRQATKDAGRIAGLEVKRIINEPTAAALAYGIDKKQGDNIVAVYDLGGGTFDISIIEIDSNDGDQTFEVLATNGDTHLGGEDFDNRLINYLADEFKKEQGLDLRKDPLAMQRLKEAAEKAKIELSSTNQTEVNLPYITADATGPKHLVVKITRAKLESLVEDLIIRTLEPLKVALADADLSVSDINEVILVGGQTRMPKVQEAVSNFFGKEPRKDVNPDEAVAVGAAIQAGVLSGDVKDVLLLDVTPLSLGIETMGSVMTKLIEKNTTIPTKAQQVFSTADDNQSAVTIHVLQGERKQASANKSLGQFNLDGIEPAPRGMPQIEVMFDIDADGILHVSATDKKTGKKQNITIKASSGLSEEEVAQMVRDAEAHAEEDKKFEELVQSRNQADGLVHATKKQVEEAGDALPADDKAKIEAAMSAVEVATKGNDKEAIEKATQELIEASAKLMEIAQAKAQTQGGAQEGAAKQSNATADDVVDAEFEEVKDDKK.

Thr198 is subject to Phosphothreonine; by autocatalysis. Residues Ala603–Gln618 are compositionally biased toward low complexity. A disordered region spans residues Ala603 to Lys639. The span at Asp625 to Lys639 shows a compositional bias: acidic residues.

Belongs to the heat shock protein 70 family.

In terms of biological role, acts as a chaperone. The chain is Chaperone protein DnaK from Shewanella sp. (strain MR-7).